A 521-amino-acid chain; its full sequence is MAEKSGVTGLDFEFVKTPAFPKPDFDKLENVGVPTTRYPAIKNAPLPADGSGSDTFNNYVLISILTIVPWWLSWKVGGGFKTTLFFAIIVDLPMLAAWWLTISAISPRKNEKVRLPNRGVEHYLEFKKEADRAKYRGTNKIPMETFYEMYFDGDVDFKGDCLEVMEQRHDWVSFRFTIGLIKFFLFGMMPEVIMHTRSQDEEQVRDHYDRGDDFYGWFLGPRMIYTSGIISDINREETLEELQDNKLTVVCEKIGLTKGDSMLDIGCGWGTLARFASEQYGANVTGVTLGRNQTAWGNSSMRKVGIPEEQSRIVCKDYRDIPVPVGGYKKITSLEMSEHVGIRHFSSFLKQVHDMLDDDGVFFLQYAGIRKAWQYEDLTWGLFMNKYIFPGADASTPLGWVVDKLEGTGFEIKHIDTIGVHYSATLWRWYRNWMDNRDKVEAKYGKRWFRIWEFFLAYSTIISRQGSATCFQITMVKNINSTHRIDGVETQFNLHGALDNCRADLQSWAAKNNVKTPSELL.

2 helical membrane passes run 60–80 (VLIS…GGGF) and 85–105 (FFAI…ISAI). Residues 225 to 226 (YT), 262 to 270 (MLDIGCGWG), 288 to 293 (TLGRNQ), and 318 to 319 (YR) each bind S-adenosyl-L-methionine.

Belongs to the CFA/CMAS family.

It localises to the membrane. It carries out the reaction a (4E,8E)-4-sphinga-4,8-dienine ceramide + S-adenosyl-L-methionine = a 9-methyl-(4E,8E)-sphinga-4,8-dienine ceramide + S-adenosyl-L-homocysteine + H(+). The protein operates within lipid metabolism; sphingolipid metabolism. In terms of biological role, catalyzes methylation of the sphingoid base component of glucosylceramides (GluCers) at the C9-position. Sphingolipid C9-methylation requires 4,8-desaturated ceramides as substrates. Glucosylceramides play important roles in growth, differentiation and pathogenicity. The methyl group at the C9-position distinguishes fungal glucosylceramides from those of plants and animals and may thus play a role in host-pathogen interactions enabling the host to recognize the fungal attack and initiate specific defense responses. However, C-9 methylation of GlcCers is not essential for the sensitivity of F.graminearum to plant defensins MsDef1 and RsAFP2. The protein is Sphingolipid C9-methyltransferase 2 of Gibberella zeae (strain ATCC MYA-4620 / CBS 123657 / FGSC 9075 / NRRL 31084 / PH-1) (Wheat head blight fungus).